Reading from the N-terminus, the 53-residue chain is Small ribosomal subunit protein uS14m (53 aa).

This sequence belongs to the universal ribosomal protein uS14 family.

Its subcellular location is the mitochondrion. The sequence is that of Small ribosomal subunit protein uS14m (RPS14) from Bigelowiella natans (Pedinomonas minutissima).